The sequence spans 490 residues: Probable cytosol aminopeptidase (490 aa).

Positions 262 and 267 each coordinate Mn(2+). Residue Lys274 is part of the active site. Positions 285, 344, and 346 each coordinate Mn(2+). Arg348 is an active-site residue.

It belongs to the peptidase M17 family. Mn(2+) is required as a cofactor.

It is found in the cytoplasm. It carries out the reaction Release of an N-terminal amino acid, Xaa-|-Yaa-, in which Xaa is preferably Leu, but may be other amino acids including Pro although not Arg or Lys, and Yaa may be Pro. Amino acid amides and methyl esters are also readily hydrolyzed, but rates on arylamides are exceedingly low.. It catalyses the reaction Release of an N-terminal amino acid, preferentially leucine, but not glutamic or aspartic acids.. Presumably involved in the processing and regular turnover of intracellular proteins. Catalyzes the removal of unsubstituted N-terminal amino acids from various peptides. The polypeptide is Probable cytosol aminopeptidase (Mannheimia succiniciproducens (strain KCTC 0769BP / MBEL55E)).